We begin with the raw amino-acid sequence, 179 residues long: UPF0227 protein VIBHAR_01524 (179 aa).

It belongs to the UPF0227 family.

This is UPF0227 protein VIBHAR_01524 from Vibrio campbellii (strain ATCC BAA-1116).